The primary structure comprises 559 residues: Glycerol kinase (559 aa).

An ADP-binding site is contributed by T20. Positions 20, 21, and 22 each coordinate ATP. T20 contacts sn-glycerol 3-phosphate. ADP is bound at residue R24. Residues R94, E95, and Y148 each coordinate sn-glycerol 3-phosphate. 3 residues coordinate glycerol: R94, E95, and Y148. G252 is a binding site for beta-D-fructose 1,6-bisphosphate. Residue D265 participates in sn-glycerol 3-phosphate binding. Positions 265 and 266 each coordinate glycerol. ADP-binding residues include T287, G332, G433, and N437. Residues T287, G332, and G433 each coordinate ATP. Position 501 (E501) interacts with Zn(2+). The helical transmembrane segment at I532–A552 threads the bilayer.

This sequence belongs to the FGGY kinase family.

It is found in the mitochondrion outer membrane. The protein localises to the nucleus. Its subcellular location is the cytoplasm. It localises to the cytosol. The enzyme catalyses glycerol + ATP = sn-glycerol 3-phosphate + ADP + H(+). Its pathway is polyol metabolism; glycerol degradation via glycerol kinase pathway; sn-glycerol 3-phosphate from glycerol: step 1/1. In terms of biological role, kinase that plays a key role in glycerol metabolism, catalyzing its phosphorylation to produce sn-glycerol 3-phosphate. Sn-glycerol 3-phosphate is a crucial intermediate in various metabolic pathways, such as the synthesis of glycerolipids and triglycerides, glycogenesis, glycolysis and gluconeogenesis. The sequence is that of Glycerol kinase from Bos taurus (Bovine).